Consider the following 127-residue polypeptide: Major sperm protein 77/79 (127 aa).

N-acetylalanine is present on Ala-2. The MSP domain maps to Asp-9 to Asn-126.

In terms of tissue distribution, sperm.

It localises to the cell projection. The protein resides in the pseudopodium. It is found in the cytoplasm. Its subcellular location is the cytoskeleton. In terms of biological role, central component in molecular interactions underlying sperm crawling. Forms an extensive filament system that extends from sperm villipoda, along the leading edge of the pseudopod. The protein is Major sperm protein 77/79 (msp-77) of Caenorhabditis elegans.